We begin with the raw amino-acid sequence, 935 residues long: Coatomer subunit gamma (935 aa).

HEAT repeat units lie at residues 258–296 (PQLFSQFRPLLSDWLSNKFESVQLETAKLITSFATRNSR), 337–372 (PEKIVVCNPELESLINDSNRNISTYAITTLLKTGTS), 373–410 (KNISSLISTITNFIHDVSDDFKIIIIDAVRTLSLNFPQ), 412–449 (WKSILNFLIDVLKNSEGGFKFKNSIVEALIDIVSFVPQ), and 524–562 (PTLYESIISLLKRIANDKDDEVRDRATIALEFIDSARNK). The interval 630-656 (KSETTLDTTPEAESVPEKRADANSFAG) is disordered. Thr638 is subject to Phosphothreonine. The residue at position 643 (Ser643) is a Phosphoserine. Residue Lys647 forms a Glycyl lysine isopeptide (Lys-Gly) (interchain with G-Cter in ubiquitin) linkage. The residue at position 653 (Ser653) is a Phosphoserine.

The protein belongs to the COPG family. Oligomeric complex that consists of at least the alpha, beta, beta', gamma, delta, epsilon and zeta subunits. Interacts (via C-terminus) with GEA1 (via N-terminal region) and KEI1 (via C-terminal region).

Its subcellular location is the cytoplasm. It localises to the golgi apparatus membrane. The protein resides in the cytoplasmic vesicle. It is found in the COPI-coated vesicle membrane. The protein localises to the endosome. In terms of biological role, the coatomer is a cytosolic protein complex that binds to dilysine motifs and reversibly associates with Golgi non-clathrin-coated vesicles, which further mediate biosynthetic protein transport from the ER, via the Golgi up to the trans Golgi network. Coatomer complex is required for budding from Golgi membranes, and is essential for the retrograde Golgi-to-ER transport of dilysine-tagged proteins. This chain is Coatomer subunit gamma (SEC21), found in Saccharomyces cerevisiae (strain ATCC 204508 / S288c) (Baker's yeast).